Reading from the N-terminus, the 262-residue chain is Indole-3-glycerol phosphate synthase (262 aa).

It belongs to the TrpC family.

It catalyses the reaction 1-(2-carboxyphenylamino)-1-deoxy-D-ribulose 5-phosphate + H(+) = (1S,2R)-1-C-(indol-3-yl)glycerol 3-phosphate + CO2 + H2O. Its pathway is amino-acid biosynthesis; L-tryptophan biosynthesis; L-tryptophan from chorismate: step 4/5. The protein is Indole-3-glycerol phosphate synthase of Staphylococcus epidermidis (strain ATCC 12228 / FDA PCI 1200).